Here is an 84-residue protein sequence, read N- to C-terminus: Beta-toxin Tf1a (84 aa).

The signal sequence occupies residues 1–20 (MKGMILFISCLLLIGIVVEC). The 62-residue stretch at 21-82 (KEGYLMDHEG…VWERATNRCG (62 aa)) folds into the LCN-type CS-alpha/beta domain. 4 disulfides stabilise this stretch: Cys-31-Cys-81, Cys-35-Cys-57, Cys-43-Cys-62, and Cys-47-Cys-64. Cys-81 carries the cysteine amide modification.

Belongs to the long (4 C-C) scorpion toxin superfamily. Sodium channel inhibitor family. Beta subfamily. In terms of tissue distribution, expressed by the venom gland.

It is found in the secreted. In terms of biological role, beta toxins bind voltage-independently at site-4 of sodium channels (Nav) and shift the voltage of activation toward more negative potentials thereby affecting sodium channel activation and promoting spontaneous and repetitive firing. The toxin induces a leftward shift, on all channels tested (including Blattella germanica and Varroa destructor Nav1), displacing a change in voltage dependence activation to more hyperpolarized potentials. In addition, the toxin mostly inhibits peak current of hNav1.4/SCN4A (53% inhibition of peak current at 100 nM) and hNav1.5/SCN5A (71% inhibition). The chain is Beta-toxin Tf1a from Tityus fasciolatus (Central Brazilian scorpion).